We begin with the raw amino-acid sequence, 193 residues long: ATP synthase subunit b (193 aa).

The helical transmembrane segment at 24–44 (PLAELIVGLLAFGLLVGFFFW) threads the bilayer.

The protein belongs to the ATPase B chain family. In terms of assembly, F-type ATPases have 2 components, F(1) - the catalytic core - and F(0) - the membrane proton channel. F(1) has five subunits: alpha(3), beta(3), gamma(1), delta(1), epsilon(1). F(0) has three main subunits: a(1), b(2) and c(10-14). The alpha and beta chains form an alternating ring which encloses part of the gamma chain. F(1) is attached to F(0) by a central stalk formed by the gamma and epsilon chains, while a peripheral stalk is formed by the delta and b chains.

It localises to the cell membrane. Its function is as follows. F(1)F(0) ATP synthase produces ATP from ADP in the presence of a proton or sodium gradient. F-type ATPases consist of two structural domains, F(1) containing the extramembraneous catalytic core and F(0) containing the membrane proton channel, linked together by a central stalk and a peripheral stalk. During catalysis, ATP synthesis in the catalytic domain of F(1) is coupled via a rotary mechanism of the central stalk subunits to proton translocation. In terms of biological role, component of the F(0) channel, it forms part of the peripheral stalk, linking F(1) to F(0). The protein is ATP synthase subunit b of Parafrankia sp. (strain EAN1pec).